We begin with the raw amino-acid sequence, 6713 residues long: Extracellular matrix-binding protein EbhA (6713 aa).

FIVAR domains follow at residues 1–58, 126–184, 252–310, 378–436, 504–562, 630–688, 756–814, 882–940, 1008–1066, 1134–1192, 1260–1318, 1386–1444, 1512–1570, 1638–1696, 1764–1822, 1890–1948, 2142–2200, 2268–2325, 2393–2451, 2519–2577, 2645–2703, 2771–2829, 2897–2955, 3023–3081, 3149–3207, 3275–3333, 3401–3459, 3527–3585, 3653–3711, 3779–3837, 3905–3963, 4031–4089, 4157–4218, 4283–4341, 4409–4467, 4535–4592, 4660–4718, 4786–4844, 4912–4970, 5038–5096, 5164–5222, 5290–5344, 5412–5471, and 5666–5722; these read MGNL…VEQA, AMGQ…VTAA, AMKG…ITQA, QMGN…VEAA, AMAN…VENA, AMGT…INQI, AMGQ…VDRA, AMNS…VDNA, AMGA…INDM, AMTA…VNSA, AMHS…VEQA, AMGQ…VERA, AMTA…VTNA, AMKG…INQA, AMTN…VETA, AMNQ…INQK, AMGN…VQAA, AMGQ…VEAA, AMQR…VEQA, AMDQ…VTAA, AMNQ…VTQA, AMER…VEAA, AMGN…VEAA, AMDK…INQA, AMGN…VEQA, AMTQ…ITAA, AMTQ…IQQA, AMTN…VEQA, AMTQ…VAQA, AMGT…VTKA, AMGN…ITRA, AMDQ…ITNE, AMEL…VNGA, AMHG…INQV, LMDA…VSSA, AMKA…IDQA, AMEA…VEQL, AMQA…VEQL, AMET…VEQA, SMDQ…VDQA, AMDQ…VIKL, and AMET…INGA. The helical transmembrane segment at 6518-6540 threads the bilayer; it reads VIKNAIGVVGISGLLASFWFFIA. The tract at residues 6616-6713 is disordered; sequence RRKEDEEDVE…KKKKSKKNKK (98 aa). 2 stretches are compositionally biased toward basic and acidic residues: residues 6631-6641 and 6680-6690; these read TDEKVLKDNEH and QKDNQSKDKKS. Over residues 6695–6713 the composition is skewed to basic residues; that stretch reads TSKKVAAKKKKKKSKKNKK.

The protein resides in the cell membrane. The protein is Extracellular matrix-binding protein EbhA (ebhA) of Staphylococcus aureus (strain Mu3 / ATCC 700698).